The sequence spans 244 residues: Protein crossbronx (244 aa).

The UBC core domain occupies 20–176 (QQEYKILAEY…VQKNIKESKD (157 aa)).

The protein belongs to the ubiquitin-conjugating enzyme family. FTS subfamily.

In Drosophila yakuba (Fruit fly), this protein is Protein crossbronx (cbx).